The primary structure comprises 248 residues: UPF0651 protein YPL107W, mitochondrial (248 aa).

The transit peptide at 1–26 (MIRNQGWSLLYRIYPVRRFTRYSRVD) directs the protein to the mitochondrion. Positions 69-116 (KKIAGVQVPAKPQEPDNCCMSGCVNCVWEIYSEDLRDWKHRRKEAAEK) constitute an Oxidoreductase-like domain.

The protein belongs to the UPF0651 family.

It is found in the mitochondrion. In Saccharomyces cerevisiae (strain ATCC 204508 / S288c) (Baker's yeast), this protein is UPF0651 protein YPL107W, mitochondrial.